The sequence spans 178 residues: SPbeta prophage-derived uncharacterized protein YonC (178 aa).

This is SPbeta prophage-derived uncharacterized protein YonC (yonC) from Bacillus subtilis (strain 168).